Reading from the N-terminus, the 221-residue chain is LHFPL tetraspan subfamily member 5 protein (221 aa).

The Cytoplasmic portion of the chain corresponds to Met-1–Ala-24. A helical membrane pass occupies residues Met-25–Ile-45. The Extracellular segment spans residues Gln-46–Met-98. The chain crosses the membrane as a helical span at residues Phe-99–Phe-119. At Phe-120–Lys-128 the chain is on the cytoplasmic side. A helical membrane pass occupies residues Val-129–Pro-149. The Extracellular portion of the chain corresponds to Asp-150–Tyr-179. The helical transmembrane segment at Ile-180 to Gly-200 threads the bilayer. The Cytoplasmic segment spans residues Asn-201–Glu-221.

Belongs to the LHFP family.

The protein localises to the cell membrane. Its function is as follows. Probable component of the mechanotransducer (MET) non-specific cation channel complex. The sequence is that of LHFPL tetraspan subfamily member 5 protein from Gallus gallus (Chicken).